The following is an 80-amino-acid chain: Photosystem II extrinsic protein V (80 aa).

Methionine 47 provides a ligand contact to heme.

Belongs to the cytochrome c family. PsbV subfamily. PSII is composed of 1 copy each of membrane proteins PsbA, PsbB, PsbC, PsbD, PsbE, PsbF, PsbH, PsbI, PsbJ, PsbK, PsbL, PsbM, PsbT, PsbY, PsbZ, Psb30/Ycf12, at least 3 peripheral proteins of the oxygen-evolving complex and a large number of cofactors. It forms dimeric complexes. Heme is required as a cofactor.

Its subcellular location is the plastid. It localises to the chloroplast thylakoid membrane. In terms of biological role, one of the extrinsic, lumenal subunits of photosystem II (PSII). PSII is a light-driven water plastoquinone oxidoreductase, using light energy to abstract electrons from H(2)O, generating a proton gradient subsequently used for ATP formation. The extrinsic proteins stabilize the structure of photosystem II oxygen-evolving complex (OEC), the ion environment of oxygen evolution and protect the OEC against heat-induced inactivation. The sequence is that of Photosystem II extrinsic protein V from Thalassiosira weissflogii (Marine diatom).